Here is a 481-residue protein sequence, read N- to C-terminus: Adenosylhomocysteinase (481 aa).

Substrate-binding residues include T65, D140, and E200. 201 to 203 (TTT) contacts NAD(+). Substrate is bound by residues K230 and D234. NAD(+) is bound by residues N235, 264 to 269 (GYGDVG), E287, N322, 343 to 345 (IGH), and N393.

The protein belongs to the adenosylhomocysteinase family. Requires NAD(+) as cofactor.

It is found in the cytoplasm. The enzyme catalyses S-adenosyl-L-homocysteine + H2O = L-homocysteine + adenosine. It functions in the pathway amino-acid biosynthesis; L-homocysteine biosynthesis; L-homocysteine from S-adenosyl-L-homocysteine: step 1/1. In terms of biological role, may play a key role in the regulation of the intracellular concentration of adenosylhomocysteine. The polypeptide is Adenosylhomocysteinase (Polynucleobacter necessarius subsp. necessarius (strain STIR1)).